The following is a 234-amino-acid chain: Probable chemoreceptor glutamine deamidase CheD 1 (234 aa).

The protein belongs to the CheD family.

It carries out the reaction L-glutaminyl-[protein] + H2O = L-glutamyl-[protein] + NH4(+). Functionally, probably deamidates glutamine residues to glutamate on methyl-accepting chemotaxis receptors (MCPs), playing an important role in chemotaxis. The sequence is that of Probable chemoreceptor glutamine deamidase CheD 1 from Albidiferax ferrireducens (strain ATCC BAA-621 / DSM 15236 / T118) (Rhodoferax ferrireducens).